The sequence spans 954 residues: Glycine dehydrogenase (decarboxylating) (954 aa).

Lysine 704 bears the N6-(pyridoxal phosphate)lysine mark.

It belongs to the GcvP family. In terms of assembly, the glycine cleavage system is composed of four proteins: P, T, L and H. The cofactor is pyridoxal 5'-phosphate.

It catalyses the reaction N(6)-[(R)-lipoyl]-L-lysyl-[glycine-cleavage complex H protein] + glycine + H(+) = N(6)-[(R)-S(8)-aminomethyldihydrolipoyl]-L-lysyl-[glycine-cleavage complex H protein] + CO2. Functionally, the glycine cleavage system catalyzes the degradation of glycine. The P protein binds the alpha-amino group of glycine through its pyridoxal phosphate cofactor; CO(2) is released and the remaining methylamine moiety is then transferred to the lipoamide cofactor of the H protein. This chain is Glycine dehydrogenase (decarboxylating), found in Vibrio vulnificus (strain CMCP6).